A 256-amino-acid chain; its full sequence is Triosephosphate isomerase (256 aa).

Substrate is bound at residue 9–11 (NWK). The active-site Electrophile is His-94. The active-site Proton acceptor is the Glu-166. Substrate-binding positions include Gly-172, Ser-211, and 232-233 (GG).

It belongs to the triosephosphate isomerase family. Homodimer.

Its subcellular location is the cytoplasm. It carries out the reaction D-glyceraldehyde 3-phosphate = dihydroxyacetone phosphate. It functions in the pathway carbohydrate biosynthesis; gluconeogenesis. The protein operates within carbohydrate degradation; glycolysis; D-glyceraldehyde 3-phosphate from glycerone phosphate: step 1/1. Involved in the gluconeogenesis. Catalyzes stereospecifically the conversion of dihydroxyacetone phosphate (DHAP) to D-glyceraldehyde-3-phosphate (G3P). This is Triosephosphate isomerase from Natranaerobius thermophilus (strain ATCC BAA-1301 / DSM 18059 / JW/NM-WN-LF).